The primary structure comprises 601 residues: Nuclear envelope protein ndc1 (601 aa).

Over 1–34 the chain is Cytoplasmic; sequence MVMLRTSFPSGSRTKAVRYHTLLRPILQQRFLRA. Residues 35–55 form a helical membrane-spanning segment; it reads CFALLCLCCITSYWFSSGPFI. Residues 56 to 58 are Perinuclear space-facing; the sequence is SLS. The helical transmembrane segment at 59 to 79 threads the bilayer; it reads FWFLSLVRGFVCFFFMFPYFV. The Cytoplasmic portion of the chain corresponds to 80–106; sequence MLKSRMSTQKVTKQSLGAQLFYDFSPK. A helical transmembrane segment spans residues 107–127; the sequence is SFFLVYLTFAVSVSCLCLFYI. Over 128–153 the chain is Perinuclear space; sequence KGHASSIRLQWIASPNAYELPSLNER. Residues 154-174 traverse the membrane as a helical segment; it reads FVYMTYFSHILILALTVEHLY. Over 175-182 the chain is Cytoplasmic; the sequence is LQRDSPSR. A helical membrane pass occupies residues 183–203; the sequence is PVINVSFFNYIFQNLGWLIRF. The Perinuclear space portion of the chain corresponds to 204–256; sequence SFRKSIICCLFTPFSYAILRSYIWRFAALLTSCCRRIAYTKTPPKWPLSLRLL. Residues 257–277 traverse the membrane as a helical segment; it reads LHSFWMAFIVCLTFQIALLIF. Topologically, residues 278-601 are cytoplasmic; sequence RVFLYSGPMI…VLFREYKSNS (324 aa).

Belongs to the NDC1 family. Component of the nuclear pore complex (NPC). NPC constitutes the exclusive means of nucleocytoplasmic transport. NPCs allow the passive diffusion of ions and small molecules and the active, nuclear transport receptor-mediated bidirectional transport of macromolecules such as proteins, RNAs, ribonucleoparticles (RNPs), and ribosomal subunits across the nuclear envelope. Due to its 8-fold rotational symmetry, all subunits are present with 8 copies or multiples thereof.

The protein localises to the nucleus. It localises to the nuclear pore complex. The protein resides in the nucleus membrane. It is found in the cytoplasm. Its subcellular location is the cytoskeleton. The protein localises to the microtubule organizing center. It localises to the spindle pole body. Its function is as follows. Component of the nuclear pore complex (NPC) and the spindle pole body (SPB), which plays a key role in de novo assembly and insertion of both structures in the nuclear envelope. Involved in the formation of the bipolar mitotic spindle. Anchors the spindle pole body in the nuclear envelope. This chain is Nuclear envelope protein ndc1 (cut11), found in Schizosaccharomyces pombe (strain 972 / ATCC 24843) (Fission yeast).